The following is a 675-amino-acid chain: Myosin-binding protein 3 (675 aa).

The chain crosses the membrane as a helical span at residues isoleucine 17–asparagine 37. Disordered regions lie at residues leucine 225 to threonine 274 and serine 286 to serine 315. The span at alanine 238–aspartate 251 shows a compositional bias: basic and acidic residues. The 99-residue stretch at arginine 355 to arginine 453 folds into the GTD-binding domain. Acidic residues predominate over residues cysteine 474–valine 496. Disordered regions lie at residues cysteine 474–aspartate 497, aspartate 542–glycine 565, and alanine 582–serine 605. The segment covering serine 596 to serine 605 has biased composition (basic and acidic residues). Positions serine 605–asparagine 633 form a coiled coil.

As to quaternary structure, interacts with myosin XI-K.

The protein localises to the membrane. Membrane-anchored myosin receptors that define a distinct, plant-specific transport vesicle compartment. This is Myosin-binding protein 3 from Arabidopsis thaliana (Mouse-ear cress).